Reading from the N-terminus, the 190-residue chain is MNFLLSWVHWTLALLLYLHHAKWSQAAPTTEGEQKAHGVVEFMDVYRRSYCHPIETLVDIFQEYPDEIEYIFKPSCVPLMRCGGCCSDEALECVPTSESNITMQIMRVKPHQSQHIGEMSFLQHSRCECRPKKVRTKPENHCEPCSERRKHLFVQDPQTCKCSCKNTDSRCKARQLELNERTCRCDKPRR.

Residues 1-26 form the signal peptide; the sequence is MNFLLSWVHWTLALLLYLHHAKWSQA. 3 cysteine pairs are disulfide-bonded: Cys51–Cys93, Cys82–Cys127, and Cys86–Cys129. Asn100 carries an N-linked (GlcNAc...) asparagine glycan.

It belongs to the PDGF/VEGF growth factor family. In terms of assembly, homodimer; disulfide-linked. Also found as heterodimer with PGF. Interacts with NRP1. Interacts with isoform 2 of BSG. Interacts with CD82; this interaction inhibits VEGFA-mediated signaling pathway.

It is found in the secreted. In terms of biological role, growth factor active in angiogenesis, vasculogenesis and endothelial cell growth. Induces endothelial cell proliferation, promotes cell migration, inhibits apoptosis and induces permeabilization of blood vessels. Binds to the FLT1/VEGFR1 and KDR/VEGFR2 receptors, heparan sulfate and heparin. Binding to NRP1 receptor initiates a signaling pathway needed for motor neuron axon guidance and cell body migration, including for the caudal migration of facial motor neurons from rhombomere 4 to rhombomere 6 during embryonic development. Also binds the DEAR/FBXW7-AS1 receptor. The polypeptide is Vascular endothelial growth factor A (VEGFA) (Mesocricetus auratus (Golden hamster)).